A 679-amino-acid polypeptide reads, in one-letter code: Acetyl-coenzyme A synthetase 2 (679 aa).

A disordered region spans residues 1 to 32; that stretch reads MTSSPTHQVVHEANNIKKQETPKEFFERQPRQ. Residues 14–30 show a composition bias toward basic and acidic residues; the sequence is NNIKKQETPKEFFERQP. CoA-binding positions include 207–210 and Thr-326; that span reads RGGK. ATP contacts are provided by residues 402–404, 426–431, Asp-517, and Arg-532; these read GEP and DTYWQT. CoA is bound at residue Ser-540. Arg-543 contacts ATP. Arg-611 contributes to the CoA binding site.

The protein belongs to the ATP-dependent AMP-binding enzyme family.

It carries out the reaction acetate + ATP + CoA = acetyl-CoA + AMP + diphosphate. The polypeptide is Acetyl-coenzyme A synthetase 2 (ACS2) (Debaryomyces hansenii (strain ATCC 36239 / CBS 767 / BCRC 21394 / JCM 1990 / NBRC 0083 / IGC 2968) (Yeast)).